The sequence spans 62 residues: Sperm protamine P1 (62 aa).

Residues 1–62 are disordered; the sequence is MARYRRRSRS…RYSRRGRRRY (62 aa).

This sequence belongs to the protamine P1 family. In terms of tissue distribution, testis.

Its subcellular location is the nucleus. The protein localises to the chromosome. Its function is as follows. Protamines substitute for histones in the chromatin of sperm during the haploid phase of spermatogenesis. They compact sperm DNA into a highly condensed, stable and inactive complex. The chain is Sperm protamine P1 (PRM1) from Sarcophilus harrisii (Tasmanian devil).